Here is a 352-residue protein sequence, read N- to C-terminus: Coproporphyrin III ferrochelatase (352 aa).

Fe-coproporphyrin III-binding residues include serine 52 and tyrosine 121. Residues histidine 181 and glutamate 269 each contribute to the Fe(2+) site.

Belongs to the ferrochelatase family.

Its subcellular location is the cytoplasm. The enzyme catalyses Fe-coproporphyrin III + 2 H(+) = coproporphyrin III + Fe(2+). It functions in the pathway porphyrin-containing compound metabolism; protoheme biosynthesis. Its function is as follows. Involved in coproporphyrin-dependent heme b biosynthesis. Catalyzes the insertion of ferrous iron into coproporphyrin III to form Fe-coproporphyrin III. The chain is Coproporphyrin III ferrochelatase from Nocardia farcinica (strain IFM 10152).